The chain runs to 299 residues: Nucleotide-binding protein Moth_0258 (299 aa).

14-21 (GLSGAGKT) contributes to the ATP binding site. 68-71 (DIRG) is a GTP binding site.

This sequence belongs to the RapZ-like family.

Its function is as follows. Displays ATPase and GTPase activities. The sequence is that of Nucleotide-binding protein Moth_0258 from Moorella thermoacetica (strain ATCC 39073 / JCM 9320).